The following is a 342-amino-acid chain: uncharacterized protein (342 aa).

Belongs to the proline racemase family.

This is an uncharacterized protein from Brucella canis (strain ATCC 23365 / NCTC 10854 / RM-666).